The primary structure comprises 372 residues: UDP-N-acetylglucosamine--N-acetylmuramyl-(pentapeptide) pyrophosphoryl-undecaprenol N-acetylglucosamine transferase (372 aa).

UDP-N-acetyl-alpha-D-glucosamine is bound by residues 11 to 13 (TAG), asparagine 123, arginine 160, serine 200, and glutamine 298.

It belongs to the glycosyltransferase 28 family. MurG subfamily.

Its subcellular location is the cell membrane. The catalysed reaction is di-trans,octa-cis-undecaprenyl diphospho-N-acetyl-alpha-D-muramoyl-L-alanyl-D-glutamyl-meso-2,6-diaminopimeloyl-D-alanyl-D-alanine + UDP-N-acetyl-alpha-D-glucosamine = di-trans,octa-cis-undecaprenyl diphospho-[N-acetyl-alpha-D-glucosaminyl-(1-&gt;4)]-N-acetyl-alpha-D-muramoyl-L-alanyl-D-glutamyl-meso-2,6-diaminopimeloyl-D-alanyl-D-alanine + UDP + H(+). Its pathway is cell wall biogenesis; peptidoglycan biosynthesis. Functionally, cell wall formation. Catalyzes the transfer of a GlcNAc subunit on undecaprenyl-pyrophosphoryl-MurNAc-pentapeptide (lipid intermediate I) to form undecaprenyl-pyrophosphoryl-MurNAc-(pentapeptide)GlcNAc (lipid intermediate II). The polypeptide is UDP-N-acetylglucosamine--N-acetylmuramyl-(pentapeptide) pyrophosphoryl-undecaprenol N-acetylglucosamine transferase (Cutibacterium acnes (strain DSM 16379 / KPA171202) (Propionibacterium acnes)).